We begin with the raw amino-acid sequence, 1455 residues long: Membrane-associated guanylate kinase, WW and PDZ domain-containing protein 2 (1455 aa).

A PDZ 1 domain is found at 17–101 (ESVIGRNPEG…PLRLKCVKQG (85 aa)). One can recognise a Guanylate kinase-like domain in the interval 109–283 (RHYLNLRFQK…APVYSQPEEL (175 aa)). A disordered region spans residues 205–306 (PGATPSAEGK…DNEEPDPLPD (102 aa)). The segment covering 241 to 252 (VVNGNGVVVTPE) has biased composition (low complexity). Over residues 281–296 (EELKEQMDDTKPTKPE) the composition is skewed to basic and acidic residues. WW domains are found at residues 302-335 (DPLP…DPRL) and 348-381 (NELP…NPVL). The segment at 302–381 (DPLPDNWEMA…RRTQFENPVL (80 aa)) is interaction with DDN. Phosphotyrosine is present on tyrosine 362. PDZ domains lie at 426–510 (STTL…CRGY) and 605–683 (TLTI…HRGG). Serine 686 bears the Phosphoserine mark. The 83-residue stretch at 778–860 (DVHLRRMESG…NGQVNLTVRR (83 aa)) folds into the PDZ 4 domain. Tyrosine 827 carries the phosphotyrosine modification. Residues 869-913 (CPENGRSPGSVSTHHSSPRSDYATYTNSNHAAPSSNASPPEGFAS) are disordered. Serine 884 and serine 885 each carry phosphoserine. The span at 895-908 (NSNHAAPSSNASPP) shows a compositional bias: low complexity. Residues 920-1010 (DVVIHRKENE…SVTLRIIPQE (91 aa)) form the PDZ 5 domain. Polar residues predominate over residues 1011–1040 (ELNSPTSAPSSEKQSPMAQQSPLAQQSPLA). The interval 1011–1136 (ELNSPTSAPS…PDTRQYPLSD (126 aa)) is disordered. Serine 1014 bears the Phosphoserine mark. The span at 1067-1083 (NSYRSEVKARQDVKPDI) shows a compositional bias: basic and acidic residues. A PDZ 6 domain is found at 1147–1229 (TVDMEKGAKG…RVRLLLKRGT (83 aa)). Residues 1231 to 1455 (QVPEYDEPAP…LKPGASAASR (225 aa)) are disordered. Residues 1238–1249 (PAPWSSPAAAAP) show a composition bias toward low complexity. Over residues 1287–1299 (DIKREHDVRKPKE) the composition is skewed to basic and acidic residues. 3 stretches are compositionally biased toward low complexity: residues 1346-1363 (EARA…AARA), 1399-1412 (ALEA…RAGP), and 1422-1433 (APARKAAVAPGP).

It belongs to the MAGUK family. As to quaternary structure, interacts (via its WW domains) with DRPLA. Interacts (via its second PDZ domain) with PTEN (via unphosphorylated C-terminus); this interaction diminishes the degradation rate of PTEN. Interacts (via guanylate kinase domain) with DLGAP1. Interacts (via the PDZ domains) with GRIN2A, GRID2 and NLGN1. Interacts with CTNND2, CTNNB1, MAGUIN-1, ACVR2A, SMAD2 and SMAD3. Part of a complex consisting of MAGI2/ARIP1, ACVR2A, ACVR1B and SMAD3. May interact with HTR2A. Interacts with IGSF9, RAPGEF2 and HTR4. Identified in a complex with ACTN4, CASK, IQGAP1, NPHS1, SPTAN1 and SPTBN1. Found in a complex, at least composed of KIDINS220, MAGI2, NTRK1 and RAPGEF2; the complex is mainly formed at late endosomes in a NGF-dependent manner. Interacts with RAPGEF2; the interaction occurs before or after nerve growth factor (NGF) stimulation. Interacts (via PDZ domain) with KIDINS220 (via C-terminal domain). Interacts with DDN. Interacts with DLL1. Found in a complex with IGSF9B and NLGN2; the interaction with IGSF9B is mediated via the PDZ 5 and PDZ 6 domains, while the interaction with NLGN2 is mediated via the WW1, WW2 and PDZ2 domains. Interacts (via PDZ 6 domain) with USH1G (via SAM domain); the interaction is triggered by phosphorylation of USH1G by CK2 and negatively regulates MAGI2-mediated endocytosis. In terms of tissue distribution, specifically expressed in brain.

Its subcellular location is the cytoplasm. The protein resides in the late endosome. It localises to the synapse. It is found in the synaptosome. The protein localises to the cell membrane. Its subcellular location is the cytoskeleton. The protein resides in the microtubule organizing center. It localises to the centrosome. It is found in the cell projection. The protein localises to the cilium. Its subcellular location is the centriole. The protein resides in the photoreceptor inner segment. It localises to the photoreceptor outer segment. Functionally, seems to act as a scaffold molecule at synaptic junctions by assembling neurotransmitter receptors and cell adhesion proteins. Plays a role in nerve growth factor (NGF)-induced recruitment of RAPGEF2 to late endosomes and neurite outgrowth. May play a role in regulating activin-mediated signaling in neuronal cells. Enhances the ability of PTEN to suppress AKT1 activation. Plays a role in receptor-mediated clathrin-dependent endocytosis which is required for ciliogenesis. The polypeptide is Membrane-associated guanylate kinase, WW and PDZ domain-containing protein 2 (MAGI2) (Homo sapiens (Human)).